The primary structure comprises 357 residues: UPF0283 membrane protein BMEA_A1074 (357 aa).

The tract at residues 1–36 (MSDKTPRKPTAFRLEQPARVSAASEQEEPRRPRAVK) is disordered. The span at 27-36 (EEPRRPRAVK) shows a compositional bias: basic and acidic residues. 2 consecutive transmembrane segments (helical) span residues 78 to 98 (ILFG…TEDL) and 109 to 129 (LGWT…AIIL).

Belongs to the UPF0283 family.

It is found in the cell inner membrane. The polypeptide is UPF0283 membrane protein BMEA_A1074 (Brucella melitensis biotype 2 (strain ATCC 23457)).